The primary structure comprises 450 residues: Tubulin beta-3 chain (450 aa).

The MREI motif signature appears at 1 to 4; it reads MREI. Gly10, Gln11, Cys12, and Gln15 together coordinate GDP. Gln11 contributes to the GTP binding site. Residue Glu69 coordinates GTP. Residue Glu69 coordinates Mg(2+). Positions 99, 138, 142, 143, and 144 each coordinate GDP. GTP is bound by residues Ser138, Gly142, Thr143, and Gly144. Ser172 is subject to Phosphoserine; by CDK1. Positions 177, 204, 222, and 226 each coordinate GDP. Asn204 provides a ligand contact to GTP. Asn226 provides a ligand contact to GTP. Residues 425-450 form a disordered region; it reads YQDATAEEEGEMYEDDEEESEAQGPK. A compositionally biased stretch (acidic residues) spans 429-450; that stretch reads TAEEEGEMYEDDEEESEAQGPK. Glu438 carries the post-translational modification 5-glutamyl polyglutamate. Position 444 is a phosphoserine (Ser444).

The protein belongs to the tubulin family. Heterodimer of alpha- and beta-tubulin. A typical microtubule is a hollow water-filled tube with an outer diameter of 25 nm and an inner diameter of 15 nM. Alpha-beta heterodimers associate head-to-tail to form protofilaments running lengthwise along the microtubule wall with the beta-tubulin subunit facing the microtubule plus end conferring a structural polarity. Microtubules usually have 13 protofilaments but different protofilament numbers can be found in some organisms and specialized cells. Interacts with gamma-tubulin; the interaction allows microtubules to nucleate from the gamma-tubulin ring complex (gTuRC). Interacts with UNC5C (via cytoplasmic domain); this interaction is decreased by NTN1/Netrin-1. Interacts with NLRP5/MATER at cytoskeleton microtubules. Interacts with DPYSL5. Interacts with CFAP61. The cofactor is Mg(2+). In terms of processing, some glutamate residues at the C-terminus are polyglutamylated, resulting in polyglutamate chains on the gamma-carboxyl group. Polyglutamylation plays a key role in microtubule severing by spastin (SPAST). SPAST preferentially recognizes and acts on microtubules decorated with short polyglutamate tails: severing activity by SPAST increases as the number of glutamates per tubulin rises from one to eight, but decreases beyond this glutamylation threshold. Glutamylation is also involved in cilia motility. Some glutamate residues at the C-terminus are monoglycylated but not polyglycylated due to the absence of functional TTLL10 in human. Monoglycylation is mainly limited to tubulin incorporated into cilia and flagella axonemes, which is required for their stability and maintenance. Flagella glycylation controls sperm motility. Both polyglutamylation and monoglycylation can coexist on the same protein on adjacent residues, and lowering glycylation levels increases polyglutamylation, and reciprocally. Post-translationally, phosphorylated on Ser-172 by CDK1 during the cell cycle, from metaphase to telophase, but not in interphase. This phosphorylation inhibits tubulin incorporation into microtubules. Expression is primarily restricted to central and peripheral nervous system. Greatly increased expression in most cancerous tissues.

It is found in the cytoplasm. It localises to the cytoskeleton. The protein localises to the cell projection. The protein resides in the growth cone. Its subcellular location is the lamellipodium. It is found in the filopodium. Tubulin is the major constituent of microtubules, protein filaments consisting of alpha- and beta-tubulin heterodimers. Microtubules grow by the addition of GTP-tubulin dimers to the microtubule end, where a stabilizing cap forms. Below the cap, alpha-beta tubulin heterodimers are in GDP-bound state, owing to GTPase activity of alpha-tubulin. TUBB3 plays a critical role in proper axon guidance and maintenance. Binding of NTN1/Netrin-1 to its receptor UNC5C might cause dissociation of UNC5C from polymerized TUBB3 in microtubules and thereby lead to increased microtubule dynamics and axon repulsion. Plays a role in dorsal root ganglion axon projection towards the spinal cord. The protein is Tubulin beta-3 chain (TUBB3) of Homo sapiens (Human).